We begin with the raw amino-acid sequence, 127 residues long: Large-conductance mechanosensitive channel (127 aa).

Helical transmembrane passes span Phe-8 to Gly-28, Ile-30 to Ile-50, and Ile-70 to Phe-90.

Belongs to the MscL family. Homopentamer.

Its subcellular location is the cell membrane. Functionally, channel that opens in response to stretch forces in the membrane lipid bilayer. May participate in the regulation of osmotic pressure changes within the cell. The sequence is that of Large-conductance mechanosensitive channel from Herpetosiphon aurantiacus (strain ATCC 23779 / DSM 785 / 114-95).